Reading from the N-terminus, the 62-residue chain is MEMKNIFVALFISAVLVSSVSAATMESPAPSPGASSASTVAFPVVGSIVAASLSAFLALLLQ.

An N-terminal signal peptide occupies residues 1-22 (MEMKNIFVALFISAVLVSSVSA). A 4-hydroxyproline mark is found at Pro28, Pro30, and Pro32. 3 O-linked (Ara...) hydroxyproline glycosylation sites follow: Pro28, Pro30, and Pro32. A lipid anchor (GPI-anchor amidated serine) is attached at Ser35. Positions 36 to 62 (SASTVAFPVVGSIVAASLSAFLALLLQ) are cleaved as a propeptide — removed in mature form.

This sequence belongs to the AG-peptide AGP family. Contains 4-hydroxyproline; hydroxylated on Pro-28, Pro-30 and Pro-32. In terms of processing, O-glycosylated on hydroxyprolines; noncontiguous hydroxylproline residues are glycosylated with arabinogalactan.

Its subcellular location is the cell membrane. In terms of biological role, proteoglycan that seems to be implicated in diverse developmental roles such as differentiation, cell-cell recognition, embryogenesis and programmed cell death. This Arabidopsis thaliana (Mouse-ear cress) protein is Arabinogalactan protein 40.